Reading from the N-terminus, the 341-residue chain is Oxidoreductase swnN (341 aa).

It belongs to the NmrA-type oxidoreductase family. Isoflavone reductase subfamily.

Its pathway is mycotoxin biosynthesis. Oxidoreductase; part of the gene cluster that mediates the biosynthesis of swainsonine (SW), a cytotoxic fungal alkaloid and a potential cancer therapy drug. Swainsonine production occurs via a multibranched pathway and is dispensable for fungal colonization of plants and infection of insect hosts. The first step of swainsonine biosynthesis is the production of the precursor pipecolic acid (PA) via conversion of L-lysine (Lys) to 1-piperideine-6-carboxylate (P6C) by the aminotransferase swnA, the latter being further reduced to PA by the reductase swnR. PA can be converted from lysine by both the SW biosynthetic cluster and the unclustered genes such as lysine cyclodeaminase. The PKS-NRPS hybrid synthetase swnK uptakes and condensates PA and malonyl-CoA with and without skipping of the ketoreductase (KR) domain in order to produce 3 intermediates, 1-oxoindolizidine, (1S)-1-hydroxyindolizin, and (1R)-1-hydroxyindolizine; with the transisomer (1S)-1-hydroxyindolizin being predominant. The terminal thioester reductase (TE) domain of swnK is involved in reduction of the thioester bond to release the intermediate aldehydes. The oxidoreductase swnN could contribute to the reduction of 1-oxoindolizidine to (1S)-1-hydroxyindolizin and (1R)-1-hydroxyindolizine, contributing to the major route of SW production. The dioxygenase swnH2 would be responsible for the oxidization of (1R)-1-hydroxyindolizine into (1R,2S)-1,2-dihydroxyindolizine and of (1S)-1-hydroxyindolizin to yield both (1R,2S)-1,2-dihydroxyindolizine and (1S,2S)-1,2-dihydroxyindolizine. The dioxygenase swnH1 then performs the conversion of the 1,2-dihydroxyindolizine epimers to SW. In Metarhizium robertsii (strain ARSEF 23 / ATCC MYA-3075) (Metarhizium anisopliae (strain ARSEF 23)), this protein is Oxidoreductase swnN.